The following is an 87-amino-acid chain: Toxin Cll4 (87 aa).

Positions 1-19 (MNSLLMITACLALIGTVWA) are cleaved as a signal peptide. Positions 20–85 (KEGYIVNYHD…VWPLPKKRCN (66 aa)) constitute an LCN-type CS-alpha/beta domain. Disulfide bonds link Cys31–Cys84, Cys35–Cys60, Cys44–Cys65, and Cys48–Cys67. The residue at position 85 (Asn85) is an Asparagine amide.

The protein belongs to the long (4 C-C) scorpion toxin superfamily. Sodium channel inhibitor family. Beta subfamily. Expressed by the venom gland.

It is found in the secreted. In terms of biological role, beta toxins bind voltage-independently at site-4 of sodium channels (Nav) and shift the voltage of activation toward more negative potentials thereby affecting sodium channel activation and promoting spontaneous and repetitive firing. The polypeptide is Toxin Cll4 (Centruroides limpidus (Mexican scorpion)).